A 963-amino-acid polypeptide reads, in one-letter code: Importin-13 (963 aa).

HEAT repeat units lie at residues 24–54, 56–88, 95–135, 142–179, 194–231, 236–268, 276–325, 330–372, 375–438, 440–476, 487–522, 524–558, 562–600, 603–648, 676–716, 720–754, 761–803, 815–845, 860–893, and 897–931; these read ENVEKALHQLYYDPNIENKNLAQKWLMQAQV, PQAWHFSWQLLQPDKVPEIQYFGASALHIKISR, TDQY…LSMM, AVADMVRLFQAEDSPVDGQGRCLALLELLTVLPEEFQT, LAVECGAVFPLLEQLLQQPSSPSCVRQKVLKCFSSWVQ, LQDCEALIQAAFAALQDSELFDSSVEAIVNAIS, VNTL…ALLD, WQSF…DDIL, EAEK…YEML, AELLSNLYDKLGRLLTSSEEPYSWQHTEALLYGFQSI, VVPGLIGLIPRISISNVQLADTVMFTIGALSEWLAD, PVMINSVLPLVLHALGNPELSVSSVSTLKKICREC, LPPYAANIVAVSQDVLMKQIHKTSQCMWLMQALGFLLSA, VEEI…SNLF, PVVV…VKTL, FAPMVPQLCEMLGRMYSTIPQASALDLTRQLVHIF, FPPI…ALKR, VKAVFQCAVLALKFPEAPTVKASCGFFTELL, EDGRMLLIAVLEAIGGQASRSLMDCFADILFALN, and FSLLSMWIKEALQPPGFPSARLSPEQKDTFSQQIL. In terms of domain architecture, Importin N-terminal spans 45-111; sequence AQKWLMQAQV…KAQLFTQITR (67 aa).

It belongs to the importin beta family. Interacts with UBC9, RAN, RBM8A, eIF-1A and PAX6. As to expression, expressed in fetal brain, heart, intestine and kidney.

It is found in the cytoplasm. The protein localises to the nucleus. Functionally, functions in nuclear protein import as nuclear transport receptor. Serves as receptor for nuclear localization signals (NLS) in cargo substrates. Is thought to mediate docking of the importin/substrate complex to the nuclear pore complex (NPC) through binding to nucleoporin and the complex is subsequently translocated through the pore by an energy requiring, Ran-dependent mechanism. At the nucleoplasmic side of the NPC, Ran binds to the importin, the importin/substrate complex dissociates and importin is re-exported from the nucleus to the cytoplasm where GTP hydrolysis releases Ran. The directionality of nuclear import is thought to be conferred by an asymmetric distribution of the GTP- and GDP-bound forms of Ran between the cytoplasm and nucleus. Mediates the nuclear import of UBC9, the RBM8A/MAGOH complex, PAX6 and probably other members of the paired homeobox family. Also mediates nuclear export of eIF-1A, and the cytoplasmic release of eIF-1A is triggered by the loading of import substrates onto IPO13. The chain is Importin-13 (IPO13) from Homo sapiens (Human).